The primary structure comprises 780 residues: Mediator of RNA polymerase II transcription subunit 15 (780 aa).

The segment at 1–124 (MSEEDWPSPK…PQPTSAQARN (124 aa)) is interaction with nhr-49. Positions 2–96 (SEEDWPSPKF…SPPCTTAALL (95 aa)) are interaction with sbp-1. Disordered regions lie at residues 91–152 (TTAA…APSA), 166–363 (PSPD…QGMM), and 564–597 (GPGP…GTPN). Positions 125-139 (PPVTVATTQASTTPS) are enriched in low complexity. The span at 225–245 (PPNGYGGYGMMNGPPGSGAPM) shows a compositional bias: gly residues. Residues 296–316 (QGATPTGPSSVLESLINQPQQ) are compositionally biased toward polar residues. Composition is skewed to low complexity over residues 333-353 (AAQR…QQQR) and 574-594 (SMSG…NPMG).

The protein belongs to the Mediator complex subunit 15 family. In terms of assembly, component of the Mediator complex. Interacts with nhr-49, nhr-64 and sbp-1. In terms of tissue distribution, expressed in the intestine and head neurons.

Its subcellular location is the nucleus. Component of the Mediator complex, a coactivator involved in regulated gene transcription of nearly all RNA polymerase II-dependent genes. Mediator functions as a bridge to convey information from gene-specific regulatory proteins to the basal RNA polymerase II transcription machinery. Mediator is recruited to promoters by direct interactions with regulatory proteins and serves as a scaffold for the assembly of a functional preinitiation complex with RNA polymerase II and the general transcription factors. Required for regulated expression of genes controlling fatty acid desaturation by transcription factors including sbp-1 and nhr-49. Involved in the response to simulated microgravity, in concert with sbp-1, probably acting in the intestine. This is Mediator of RNA polymerase II transcription subunit 15 (mdt-15) from Caenorhabditis elegans.